The chain runs to 394 residues: Elongation factor Tu (394 aa).

The region spanning 10–204 (KPHVNIGTIG…AVDSYIPQPV (195 aa)) is the tr-type G domain. The segment at 19-26 (GHVDHGKT) is G1. 19–26 (GHVDHGKT) provides a ligand contact to GTP. Thr-26 contributes to the Mg(2+) binding site. A G2 region spans residues 60 to 64 (GITIS). The tract at residues 81–84 (DCPG) is G3. GTP contacts are provided by residues 81–85 (DCPGH) and 136–139 (NKVD). Positions 136-139 (NKVD) are G4. Residues 174–176 (SAL) are G5.

This sequence belongs to the TRAFAC class translation factor GTPase superfamily. Classic translation factor GTPase family. EF-Tu/EF-1A subfamily. In terms of assembly, monomer.

Its subcellular location is the cytoplasm. The enzyme catalyses GTP + H2O = GDP + phosphate + H(+). In terms of biological role, GTP hydrolase that promotes the GTP-dependent binding of aminoacyl-tRNA to the A-site of ribosomes during protein biosynthesis. The protein is Elongation factor Tu of Rickettsia helvetica.